Here is a 263-residue protein sequence, read N- to C-terminus: MKIAIAGASGRMGQMLIDTVLRTPGVTLGAALDRPGSDAVGQDAGVKLGKTTGVIVTDDVRAGLSQADVLIDFTRPDATLNHLNVARELGTAVVIGTTGFTAEQKASFKTYGESIGVVWAPNMSVGVNATFKLIEVAAKILAQGYDVEIIEAHHKHKIDAPSGTALKMGEIVAEAQGTKLADRAVYAREGETGPRELGTIGFATVRGGDIVGDHTVLFAGDGERIEITHRSNTRQSYAEGAVRAAVYVAGKKGLYDMNDVLGL.

Residues 7-12 and aspartate 33 each bind NAD(+); that span reads GASGRM. An NADP(+)-binding site is contributed by arginine 34. Residues 96 to 98 and 120 to 123 each bind NAD(+); these read GTT and APNM. The active-site Proton donor/acceptor is the histidine 153. A (S)-2,3,4,5-tetrahydrodipicolinate-binding site is contributed by histidine 154. Residue lysine 157 is the Proton donor of the active site. 163-164 is a (S)-2,3,4,5-tetrahydrodipicolinate binding site; the sequence is GT.

It belongs to the DapB family.

Its subcellular location is the cytoplasm. It catalyses the reaction (S)-2,3,4,5-tetrahydrodipicolinate + NAD(+) + H2O = (2S,4S)-4-hydroxy-2,3,4,5-tetrahydrodipicolinate + NADH + H(+). It carries out the reaction (S)-2,3,4,5-tetrahydrodipicolinate + NADP(+) + H2O = (2S,4S)-4-hydroxy-2,3,4,5-tetrahydrodipicolinate + NADPH + H(+). The protein operates within amino-acid biosynthesis; L-lysine biosynthesis via DAP pathway; (S)-tetrahydrodipicolinate from L-aspartate: step 4/4. Its function is as follows. Catalyzes the conversion of 4-hydroxy-tetrahydrodipicolinate (HTPA) to tetrahydrodipicolinate. This chain is 4-hydroxy-tetrahydrodipicolinate reductase, found in Ralstonia pickettii (strain 12J).